An 85-amino-acid polypeptide reads, in one-letter code: Putative sodium channel toxin Ts37 (85 aa).

Positions 1 to 20 (MAGEWACLLVSLVLLWGAAG) are cleaved as a signal peptide. The region spanning 22 to 83 (RDGFLLDRNF…KIWGDSVRCR (62 aa)) is the LCN-type CS-alpha/beta domain. 4 disulfides stabilise this stretch: Cys32–Cys82, Cys36–Cys59, Cys45–Cys64, and Cys49–Cys66.

This sequence belongs to the long (4 C-C) scorpion toxin superfamily. Sodium channel inhibitor family. In terms of tissue distribution, expressed by the venom gland.

The protein localises to the secreted. In terms of biological role, putative sodium channel toxin. The sequence is that of Putative sodium channel toxin Ts37 from Tityus serrulatus (Brazilian scorpion).